The chain runs to 151 residues: Protein SprT-like (151 aa).

Residues 6–147 (LQRMVENLSE…GHCNGKLRMK (142 aa)) enclose the SprT-like domain. Residue histidine 67 participates in Zn(2+) binding. Glutamate 68 is a catalytic residue. Zn(2+) is bound at residue histidine 71.

Belongs to the SprT family. The cofactor is Zn(2+).

Its subcellular location is the cytoplasm. This chain is Protein SprT-like, found in Staphylococcus aureus (strain Mu3 / ATCC 700698).